Reading from the N-terminus, the 293-residue chain is Elongation factor Ts (293 aa).

The tract at residues 80–83 (TDFV) is involved in Mg(2+) ion dislocation from EF-Tu.

The protein belongs to the EF-Ts family.

The protein resides in the cytoplasm. In terms of biological role, associates with the EF-Tu.GDP complex and induces the exchange of GDP to GTP. It remains bound to the aminoacyl-tRNA.EF-Tu.GTP complex up to the GTP hydrolysis stage on the ribosome. The protein is Elongation factor Ts of Burkholderia multivorans (strain ATCC 17616 / 249).